Here is a 578-residue protein sequence, read N- to C-terminus: Arginine--tRNA ligase (578 aa).

Residues 127–137 (PNLAKEMHVGH) carry the 'HIGH' region motif.

It belongs to the class-I aminoacyl-tRNA synthetase family. Monomer.

The protein resides in the cytoplasm. It carries out the reaction tRNA(Arg) + L-arginine + ATP = L-arginyl-tRNA(Arg) + AMP + diphosphate. The chain is Arginine--tRNA ligase from Pseudomonas putida (strain ATCC 47054 / DSM 6125 / CFBP 8728 / NCIMB 11950 / KT2440).